The chain runs to 587 residues: Putative ankyrin repeat protein L66 (587 aa).

ANK repeat units lie at residues 77–106 (DKNL…DIRI), 108–136 (NNYP…DVSD), 137–166 (YDNY…DVHC), 168–196 (DNAP…DVNY), 199–228 (NEDL…NIHF), 230–256 (DSLI…ILGN), 259–288 (NIRN…SIEN), 302–331 (FKKN…NVAF), 333–360 (DNLP…NVKI), 361–390 (NYEN…NVKD), 392–418 (TAIY…DLIK), 420–448 (HNEI…INKS), 449–478 (IYDK…DIKS), 480–507 (KFHD…KINN), 509–537 (YKNL…NMKC), and 539–567 (RIDT…KLIC).

The polypeptide is Putative ankyrin repeat protein L66 (Acanthamoeba polyphaga mimivirus (APMV)).